Consider the following 246-residue polypeptide: Uridylate kinase (246 aa).

16–19 is a binding site for ATP; that stretch reads KLGG. Residue Gly-57 coordinates UMP. ATP-binding residues include Gly-58 and Arg-62. Residues Asp-77 and 138-145 each bind UMP; that span reads MGMPYFST. Residues Tyr-171 and Asp-174 each coordinate ATP.

Belongs to the UMP kinase family. Homohexamer.

Its subcellular location is the cytoplasm. It catalyses the reaction UMP + ATP = UDP + ADP. Its pathway is pyrimidine metabolism; CTP biosynthesis via de novo pathway; UDP from UMP (UMPK route): step 1/1. Its activity is regulated as follows. Inhibited by UTP. Its function is as follows. Catalyzes the reversible phosphorylation of UMP to UDP. The protein is Uridylate kinase of Corynebacterium jeikeium (strain K411).